A 120-amino-acid polypeptide reads, in one-letter code: UPF0231 protein YacL (120 aa).

The protein belongs to the UPF0231 family.

This Salmonella agona (strain SL483) protein is UPF0231 protein YacL.